A 103-amino-acid chain; its full sequence is Large ribosomal subunit protein bL21 (103 aa).

It belongs to the bacterial ribosomal protein bL21 family. Part of the 50S ribosomal subunit. Contacts protein L20.

Its function is as follows. This protein binds to 23S rRNA in the presence of protein L20. This Shewanella sp. (strain MR-7) protein is Large ribosomal subunit protein bL21.